The sequence spans 516 residues: Protein DML1 (516 aa).

This sequence belongs to the misato family.

It is found in the mitochondrion. In terms of biological role, involved in the partitioning of the mitochondrial organelle and mitochondrial DNA (mtDNA) inheritance. The polypeptide is Protein DML1 (DML1) (Coccidioides immitis (strain RS) (Valley fever fungus)).